A 198-amino-acid polypeptide reads, in one-letter code: V-type proton ATPase subunit E (198 aa).

This sequence belongs to the V-ATPase E subunit family.

Functionally, produces ATP from ADP in the presence of a proton gradient across the membrane. The protein is V-type proton ATPase subunit E of Borrelia recurrentis (strain A1).